Here is a 223-residue protein sequence, read N- to C-terminus: Putative 3-methyladenine DNA glycosylase (223 aa).

This sequence belongs to the DNA glycosylase MPG family.

The sequence is that of Putative 3-methyladenine DNA glycosylase from Pseudomonas savastanoi pv. phaseolicola (strain 1448A / Race 6) (Pseudomonas syringae pv. phaseolicola (strain 1448A / Race 6)).